The following is a 931-amino-acid chain: Elicitor of plant defense protein 1 (931 aa).

Residues asparagine 13–proline 32 form a disordered region. One can recognise a uDENN domain in the interval proline 19–leucine 277. The cDENN domain maps to glutamate 301–glutamine 433. The 365-residue stretch at alanine 435–alanine 799 folds into the dDENN domain. Disordered regions lie at residues leucine 478–aspartate 552 and serine 566–proline 586. Residues threonine 521–serine 537 are compositionally biased toward polar residues. Residues serine 566–arginine 575 are compositionally biased toward basic and acidic residues. The segment at glycine 666 to cysteine 714 adopts a Phorbol-ester/DAG-type zinc-finger fold.

Belongs to the EPD1 elicitor family.

The protein localises to the secreted. The protein resides in the host cell. Functionally, acts as an elicitor that triggers cell death and defense responses in the host plants. The protein is Elicitor of plant defense protein 1 of Fusarium odoratissimum (strain NRRL 54006).